The sequence spans 413 residues: Argininosuccinate synthase (413 aa).

Residues 12 to 20 (AYSGGLDTS) and A39 each bind ATP. Residues Y92 and S97 each coordinate L-citrulline. G122 contributes to the ATP binding site. Positions 124, 128, and 129 each coordinate L-aspartate. Position 128 (N128) interacts with L-citrulline. L-citrulline contacts are provided by R132, S189, S198, E274, and Y286.

This sequence belongs to the argininosuccinate synthase family. Type 1 subfamily. Homotetramer.

It is found in the cytoplasm. The enzyme catalyses L-citrulline + L-aspartate + ATP = 2-(N(omega)-L-arginino)succinate + AMP + diphosphate + H(+). The protein operates within amino-acid biosynthesis; L-arginine biosynthesis; L-arginine from L-ornithine and carbamoyl phosphate: step 2/3. This Aliarcobacter butzleri (strain RM4018) (Arcobacter butzleri) protein is Argininosuccinate synthase.